Here is a 364-residue protein sequence, read N- to C-terminus: MKRNLNENSTRSTAGCLPVPLFNQKKRNRQPLTSNPCTNDPGISNASDNYDFPPLPSDWAWEAVNPELPPLTKTVNTGQIPHSVSNSLRSQDSLSKPIQSNAGSSKSDWSYRDGNKNTSLKTWDKNDFKPQCKRRNLMTNNGINSGPINLGAQQQKQLRVSESTNLPNQRESEALRQTKSSEIPGSTMRSLDKNSTLQAFKPNFQQNQFKKKMLDGFQEVNTLKKEASSYQLKLREKDNSLRIISAVIESMKYWREHVQKTVLLFEILAVLDSAVRPGPYCSKTFLMRDGKHTLPCVFYEIDRELPRLIRGRVHRCVGNYDQKKNIFKCVSVRPASASEQKTFQAFVKIVDAEMRYYTSVMNEV.

Composition is skewed to polar residues over residues 1 to 13 (MKRN…TRST), 30 to 48 (QPLT…NASD), 73 to 108 (KTVN…SKSD), 137 to 169 (LMTN…LPNQ), and 177 to 189 (QTKS…STMR). 2 disordered regions span residues 1 to 51 (MKRN…DNYD) and 70 to 189 (PLTK…STMR).

Component of a multiprotein complex with MEIOB and RPA2. Interacts with MEIOB. Interacts with the complex BRME1:HSF2BP:BRCA2.

It localises to the chromosome. In terms of biological role, meiosis-specific protein required for homologous recombination in meiosis I. This is Spermatogenesis-associated protein 22 (SPATA22) from Bos taurus (Bovine).